The sequence spans 356 residues: Icosanoyl-CoA 5-desaturase (356 aa).

Residues 5–25 traverse the membrane as a helical segment; it reads LYFPISISLSLSLEAMASFIA. The interval 38 to 58 is disordered; the sequence is LDPKIPTKPEPKTETPKPKDD. The span at 42 to 58 shows a compositional bias: basic and acidic residues; sequence IPTKPEPKTETPKPKDD. 2 helical membrane passes run 88-108 and 111-131; these read NAVTLLVLHALAAMAPFYFSW and FWISFILLGFASGVLGITLCF. The Histidine box-1 motif lies at 132 to 137; it reads HRCLTH. Residues 169 to 173 carry the Histidine box-2 motif; it reads HRYHH. Residues 236-256 form a helical membrane-spanning segment; that stretch reads ALIALLYYVGGFPYIVWGMGF. Residues 302 to 306 carry the Histidine box-3 motif; the sequence is HNNHH.

This sequence belongs to the fatty acid desaturase type 1 family. Fe(2+) is required as a cofactor.

The protein localises to the membrane. The catalysed reaction is eicosanoyl-CoA + 2 Fe(II)-[cytochrome b5] + O2 + 2 H(+) = (5Z)-eicosenoyl-CoA + 2 Fe(III)-[cytochrome b5] + 2 H2O. The protein operates within lipid metabolism; monounsaturated fatty acid biosynthesis. Functionally, desaturase involved in the biosynthesis of (5Z)-icos-5-enoate, an unusual monounsaturated fatty acid that makes up to 60% of the total fatty acids in Limnanthes sp. seed oil. Only acts on saturated fatty acids. This is Icosanoyl-CoA 5-desaturase from Limnanthes douglasii (Douglas' meadowfoam).